The following is a 339-amino-acid chain: Serpentine receptor class gamma-7 (339 aa).

7 helical membrane-spanning segments follow: residues 30 to 50 (YWIQCLWLIPTLFLLVWIIIT), 65 to 85 (WILTADCVVSIILILLDLFVV), 98 to 118 (FSTIFINYPIISDIYFPIYNY), 152 to 172 (IPLFLTIICILPILVVWNTVI), 200 to 220 (LHLTFIFVSISFILISSLLLM), 239 to 259 (SIFIIVAFFFQAAFQSFYAFF), and 268 to 288 (FLVDFQFIIYDVMTVGYPLIF). A disordered region spans residues 319-339 (PFNNTMPRQESPSPNYDSILA).

Belongs to the nematode receptor-like protein srg family.

Its subcellular location is the membrane. In Caenorhabditis elegans, this protein is Serpentine receptor class gamma-7 (srg-7).